The sequence spans 439 residues: Hydroxyornithine transacylase SID3 (439 aa).

The PTS1-type peroxisomal targeting signal motif lies at 437 to 439 (SKL).

This sequence belongs to the lysine N-acyltransferase mbtK family.

Its subcellular location is the peroxisome. Its pathway is siderophore biosynthesis. In terms of biological role, hydroxyornithine transacylase; part of the gene cluster that mediates the biosynthesis of hydroxamate-containing siderophores that play a critical role in virulence via intracellular iron acquisition during macrophage infection. The polypeptide is Hydroxyornithine transacylase SID3 (Ajellomyces capsulatus (Darling's disease fungus)).